The following is a 499-amino-acid chain: Acetylcholine receptor subunit alpha-type acr-16 (499 aa).

Residues 1-19 form the signal peptide; it reads MSSVCALLLSCALFLVAHG. Residues 20-232 are Extracellular-facing; the sequence is SLQERRLYED…LHMRRRTLYY (213 aa). Residues asparagine 43 and asparagine 93 are each glycosylated (N-linked (GlcNAc...) asparagine). Cystine bridges form between cysteine 147–cysteine 161 and cysteine 211–cysteine 212. 3 consecutive transmembrane segments (helical) span residues 233-253, 261-281, and 289-309; these read GFNLIMPCILTTLMTLLGFTL, ITLQITVLLSICFFLSIVSEM, and VPLLGIFFTCCMIVVTASTVF. Topologically, residues 310-473 are cytoplasmic; that stretch reads TVYVLNLHYR…WKFAAMVVDR (164 aa). Residues 474-494 traverse the membrane as a helical segment; sequence LCLYVFTIFIIASTIGIFWSA. Residues 495 to 499 lie on the Extracellular side of the membrane; it reads PYLVA.

Belongs to the ligand-gated ion channel (TC 1.A.9) family. Acetylcholine receptor (TC 1.A.9.1) subfamily.

Its subcellular location is the postsynaptic cell membrane. The protein localises to the cell membrane. Functionally, after binding acetylcholine, the AChR responds by an extensive change in conformation that affects all subunits and leads to opening of an ion-conducting channel across the plasma membrane. A subunit of the levamisole-insensitive nicotinic receptor. In Caenorhabditis briggsae, this protein is Acetylcholine receptor subunit alpha-type acr-16.